The sequence spans 49 residues: Large ribosomal subunit protein bL33B (49 aa).

The protein belongs to the bacterial ribosomal protein bL33 family.

This is Large ribosomal subunit protein bL33B from Levilactobacillus brevis (strain ATCC 367 / BCRC 12310 / CIP 105137 / JCM 1170 / LMG 11437 / NCIMB 947 / NCTC 947) (Lactobacillus brevis).